A 339-amino-acid polypeptide reads, in one-letter code: Lymphocyte-specific protein 1 (339 aa).

The tract at residues 1–198 (MAEASSDPGA…SPPLSPTTKL (198 aa)) is disordered. Ser-24 bears the Phosphoserine mark. Basic and acidic residues-rich tracts occupy residues 32–43 (VHEQCQHERDRQ) and 51–61 (GGGHVPERPKQ). Ser-111 bears the Phosphoserine mark. A compositionally biased stretch (basic and acidic residues) spans 117–140 (EDRPGLHAYEKEDSDEVHLEELSL). At Thr-175 the chain carries Phosphothreonine. A phosphoserine mark is found at Ser-177, Ser-188, Ser-189, and Ser-193. The span at 185 to 196 (IEQSSPPLSPTT) shows a compositional bias: polar residues. At Ser-252 the chain carries Phosphoserine; by MAPKAPK2. The interval 294-315 (KSLWEQKGGSKTSSTIKSTPSG) is disordered. Low complexity predominate over residues 300 to 315 (KGGSKTSSTIKSTPSG). The residue at position 327 (Lys-327) is an N6-acetyllysine.

Binds actin. In terms of processing, phosphorylated by casein kinase II, protein kinase C and MAPKAPK2. Phosphorylation by PKC induces translocation from membrane to cytoplasm. Phosphorylation by MAPKAPK2 may regulate neutrophil chemotaxis. In terms of tissue distribution, activated T-lymphocytes.

The protein localises to the cell membrane. Functionally, may play a role in mediating neutrophil activation and chemotaxis. The protein is Lymphocyte-specific protein 1 (LSP1) of Homo sapiens (Human).